Here is a 2530-residue protein sequence, read N- to C-terminus: Agglutinin-like protein 2 (2530 aa).

Residues 1–17 (MLLQFLLLSLCVSVATA) form the signal peptide. 4 disulfide bridges follow: cysteine 73–cysteine 150, cysteine 96–cysteine 112, cysteine 205–cysteine 297, and cysteine 227–cysteine 256. Asparagine 253 and asparagine 315 each carry an N-linked (GlcNAc...) asparagine glycan. ALS repeat units lie at residues 364–395 (TTITTSYVGVTTSYSTKTAPIGETATVIVDVP), 400–431 (TTVTSEWTGTITTTTTRTNPTDSIDTVVVQVP), 437–468 (VTTTEYWSQSYATTTTVTAPPGGTDSVIIREP), 473–504 (VTTTEYWSQSYATSSTVTAPPGGTDTVIIREP), 509–540 (VTTTEYWSQSYATTTTVTAPPGGTDSVIIREP), and 545–576 (VTTTEYWSQSFATTTTITAPPGETDTVLIREP). Residue asparagine 578 is glycosylated (N-linked (GlcNAc...) asparagine). The stretch at 581-612 (VTTTEYWSQSYVTTSTITAPPGGTDTVIIREP) is one ALS 7 repeat. Asparagine 614 carries an N-linked (GlcNAc...) asparagine glycan. 7 ALS repeats span residues 617–648 (VTTTEYWSQSYATTTTVTAPPGGTDTVIIREP), 653–684 (VTTTEYWSQSYATTTTVTGPPGGTDTVIIREP), 689–720 (VTTTEYWSQSYATTTTVTAPPGGTDTVIIREP), 725–756 (VTTTEYWSQSYATTTTVTGPPGGTDTVIIREP), 761–792 (VTTTEYWSQSYATTTTVTAPPGGTATVIIREP), 797–828 (VTTTEYWSQSYATTTTVTGPPGGTDTVIIREP), and 833–864 (VTTTEYWSQSYATTTTVTAPPGGTATVIIREP). Asparagine 866 carries N-linked (GlcNAc...) asparagine glycosylation. ALS repeat units lie at residues 869 to 900 (VTTTEYWSQSYATTTTVTGPPGGTDTVIIREP), 905 to 936 (VTTTEYWSQSYATTTTVTAPPGGTATVIIREP), 941 to 972 (VTTTEYWSQSYATTTTVTGPPGGTDTVIIREP), and 977 to 1008 (VTTTEYWSQSYATTTTVTAPPGGTATVIIREP). A compositionally biased stretch (low complexity) spans 954–967 (TTTVTGPPGGTDTV). Positions 954 to 975 (TTTVTGPPGGTDTVIIREPPNP) are disordered. Asparagine 1010 carries N-linked (GlcNAc...) asparagine glycosylation. 4 ALS repeats span residues 1013 to 1044 (VTTTEYWSQSYATTTTVTGPPGGTDTVIIREP), 1049 to 1077 (VTTTEYWSQSYATTTTVTAPPGGTATVII), 1085 to 1116 (VTTTEYWSQSYATTTTVTGPPGGTDTVIIREP), and 1121 to 1152 (VTTTEYWSQSYATTTTVTAPPGGTATVIIREP). N-linked (GlcNAc...) asparagine glycosylation is present at asparagine 1154. 6 ALS repeats span residues 1157–1188 (VTTTEYWSQSYATTTTVTGPPGGTDTVIIREP), 1193–1224 (VTTTEYWSQSFATTTTVTAPPGGTDSVIIREP), 1229–1260 (VTTTEYWSQSYATTTTVTAPPGGTDSVIIREP), 1265–1296 (VTTTEYWSQSFATTTTVTAPPGGTDSVIIREP), 1301–1332 (VTTTEYWSQSYATTTTVTAPPGGTDSVIIREP), and 1337–1368 (VTTTEYWSQSYATTTTVTAPPGGTATVIIREP). Asparagine 1370 is a glycosylation site (N-linked (GlcNAc...) asparagine). The stretch at 1373-1404 (VTTTEYWSQSYATTTTVTAPPGGTATVIIREP) is one ALS 29 repeat. N-linked (GlcNAc...) asparagine glycosylation is present at asparagine 1406. An ALS 30 repeat occupies 1409–1440 (VTTTEYWSQSYATTTTITAPPGDTDTVIIREP). Residue asparagine 1442 is glycosylated (N-linked (GlcNAc...) asparagine). ALS repeat units follow at residues 1445-1476 (VTTTEYWSQSFATTTTVTAPPGGTDSVIIREP) and 1481-1512 (VTTTEYWSQSYATTTTVTAPPGGTATVIIREP). Asparagine 1514 carries an N-linked (GlcNAc...) asparagine glycan. An ALS 33 repeat occupies 1517-1548 (VTTTEYWSQSYATTTTVTAPPGGTATVIIREP). Asparagine 1550 is a glycosylation site (N-linked (GlcNAc...) asparagine). Residues 1553–1584 (VTTTEYWSQSYATTTTITAPPGDTDTVIIREP) form an ALS 34 repeat. N-linked (GlcNAc...) asparagine glycosylation occurs at asparagine 1586. One copy of the ALS 35 repeat lies at 1589 to 1620 (VTTTEYWSQSYATTTTVTAPPGGTDTVIIREP). N-linked (GlcNAc...) asparagine glycosylation occurs at asparagine 1622. An ALS 36 repeat occupies 1625–1656 (VTTTEYWSQSYATTTTVTAPPGGTATVIIREP). N-linked (GlcNAc...) asparagine glycosylation is present at asparagine 1658. ALS repeat units lie at residues 1661 to 1692 (VTTTEYWSQSYATTTTVTGPPGSTDTVIIREP) and 1697 to 1728 (VTTTEYWSQSYATTTTVTAPPGGTATVIIREP). An N-linked (GlcNAc...) asparagine glycan is attached at asparagine 1730. Residues 1733–1764 (VTTTEYWSQSYATTTTVTAPPGGTDTVIIREP) form an ALS 39 repeat. The N-linked (GlcNAc...) asparagine glycan is linked to asparagine 1766. ALS repeat units follow at residues 1769–1800 (VTTTEYWSQSYATTTTVTAPPGGTDTVIIREP) and 1805–1836 (VTTTEYWSQSYATTTTVTAPPGGTATVIIREP). Residue asparagine 1838 is glycosylated (N-linked (GlcNAc...) asparagine). 2 ALS repeats span residues 1841-1872 (VTTTEYWSESYATTTTVTGPPGGTDVILIREP) and 1877-1907 (VTTTEYWSESYATTTTITAPPGATDSVRIRE). Residue asparagine 1910 is glycosylated (N-linked (GlcNAc...) asparagine). ALS repeat units follow at residues 1913-1944 (VTTTEYWSQSYATTTTVTAPPGGTDSVIIREP) and 1949-1980 (VTTTEYWSQSYATTTTVTAPPGGTATVIIREP). A glycan (N-linked (GlcNAc...) asparagine) is linked at asparagine 1982. 3 ALS repeats span residues 1985–2016 (VTTTEYWSQSYATTTTVTAPPGGTDTVIIREP), 2021–2052 (VTTTEYWSQSYATTTTVTAPPGGTATVIIREP), and 2057–2088 (VTTTEYWSQSYATTTTVTAPPGGTATVIIREP). Residue asparagine 2090 is glycosylated (N-linked (GlcNAc...) asparagine). ALS repeat units lie at residues 2093–2124 (VTTTEYWSQSYATTTTVTGPPGGTDTVIIREP) and 2129–2157 (VTTTEYWSQSYATTLTITAPPGGTNSVII). The N-linked (GlcNAc...) asparagine glycan is linked to asparagine 2197. Disordered stretches follow at residues 2200 to 2235 (VTHLPSSSSKPVDIPSSDVVTSTNDNSLTSLTGSEN) and 2274 to 2494 (TTII…QQTT). Residues 2204-2233 (PSSSSKPVDIPSSDVVTSTNDNSLTSLTGS) show a composition bias toward low complexity. A glycan (N-linked (GlcNAc...) asparagine) is linked at asparagine 2281. Positions 2282 to 2296 (GSGKSKSGELSSTGS) are enriched in low complexity. Composition is skewed to polar residues over residues 2329–2420 (STET…SATA) and 2429–2452 (NGATTKGQDTAGGNSNGSTATTNI). 2 N-linked (GlcNAc...) asparagine glycosylation sites follow: asparagine 2444 and asparagine 2466. Composition is skewed to low complexity over residues 2453 to 2471 (QGGNNEPGNQPGTNTTGEP) and 2482 to 2494 (SISQPTTLSQQTT). Aspartate 2507 carries the GPI-anchor amidated aspartate lipid modification. A propeptide spans 2508–2530 (GSGSIVQHSGWLYVLLTAISIFF) (removed in mature form).

This sequence belongs to the ALS family. N-glycosylated and O-glycosylated. In terms of processing, the GPI-anchor is attached to the protein in the endoplasmic reticulum and serves to target the protein to the cell surface. There, the glucosamine-inositol phospholipid moiety is cleaved off and the GPI-modified mannoprotein is covalently attached via its lipidless GPI glycan remnant to the 1,6-beta-glucan of the outer cell wall layer.

It localises to the cell membrane. The protein resides in the secreted. It is found in the cell wall. In terms of biological role, cell surface adhesion protein which mediates both yeast-to-host tissue adherence and yeast aggregation. Plays an important role in the pathogenesis of C.albicans infections. The polypeptide is Agglutinin-like protein 2 (ALS2) (Candida albicans (strain SC5314 / ATCC MYA-2876) (Yeast)).